Consider the following 611-residue polypeptide: MGIVLEPPCPKSVDGISIDPEPNWNFESLVAEIASVEKKLNGFSMYPQPITNTTLRMGRRGGGFVMHVSEDEMESDEGEESDDEEEEEDHSQICTAGKRFACDELYLSDESDEEFDHEPEYMMNKLGLAESALYEVINDHQTEIKDDIRNQVSVVETEIMNEIETSLSAIARVEKYSETRKEVERKLDLQYQRKVAEALDTHLTAVQREHKIKSQIEERKIRSEEAQEEARRKERAHQEEKIRQEKARAEAQMLAKIRAEEEKKEVERKAAREVAEKEVADRKAAEQKLAEQKAVIESVTGSSATSNAQAGGNSIRAAESALILENHRLKKLEELETTNQSLKSRSNENFSSFEKHIGRVIRQISGTKDSVSGKINDIVKIFKDPRCPVSISIAAFAKKMVTTKEKPNPFACSYVIVYINSQFPQVMDILLAEFHKACIYTVPKHIVNSQSAWDSDAYERLDSIMRLYGALVQTDIRVGNATNVHGIEHGWAWLARFLNKIPANRATATALNSFLQTAGFGLHQRYKSQFLKVVNVVREHFLQKLRAKKDTSDLLVIIAEITAYLDDRMYLKEPEGRAMKTTSTLSSELTAELNQPNYNQNYQRNDYRNYY.

Disordered stretches follow at residues Ser-69–Cys-94 and Lys-220–Arg-243. Over residues Asp-71–Asp-89 the composition is skewed to acidic residues.

This sequence belongs to the GLE1 family. As to quaternary structure, part of the nuclear pore complex (NPC). The NPC has an eight-fold symmetrical structure comprising a central transport channel and two rings, the cytoplasmic and nuclear rings, to which eight filaments are attached. The cytoplasmic filaments have loose ends, while the nuclear filaments are joined in a distal ring, forming a nuclear basket. NPCs are highly dynamic in configuration and composition, and can be devided in 3 subcomplexes, the NUP62 subcomplex, the NUP107-160 subcomplex and the NUP93 subcomplex, containing approximately 30 different nucleoporin proteins.

It is found in the nucleus envelope. It localises to the nucleus. The protein resides in the nuclear pore complex. In terms of biological role, required for seed viability. This is mRNA export factor GLE1 from Arabidopsis thaliana (Mouse-ear cress).